Reading from the N-terminus, the 200-residue chain is Peptidyl-tRNA hydrolase (200 aa).

Tyr15 is a tRNA binding site. The Proton acceptor role is filled by His20. TRNA is bound by residues Tyr66, Asn68, and Asn114.

It belongs to the PTH family. In terms of assembly, monomer.

The protein resides in the cytoplasm. The enzyme catalyses an N-acyl-L-alpha-aminoacyl-tRNA + H2O = an N-acyl-L-amino acid + a tRNA + H(+). Its function is as follows. Hydrolyzes ribosome-free peptidyl-tRNAs (with 1 or more amino acids incorporated), which drop off the ribosome during protein synthesis, or as a result of ribosome stalling. Catalyzes the release of premature peptidyl moieties from peptidyl-tRNA molecules trapped in stalled 50S ribosomal subunits, and thus maintains levels of free tRNAs and 50S ribosomes. This Paraburkholderia phymatum (strain DSM 17167 / CIP 108236 / LMG 21445 / STM815) (Burkholderia phymatum) protein is Peptidyl-tRNA hydrolase.